The following is a 216-amino-acid chain: Cell envelope integrity protein Cei (216 aa).

A helical membrane pass occupies residues 25–45; sequence PAIVVVAFLVVVTCVMWTLAL.

It localises to the cell membrane. In terms of biological role, contributes to cell envelope integrity and virulence. The polypeptide is Cell envelope integrity protein Cei (Mycobacterium tuberculosis (strain ATCC 25618 / H37Rv)).